Here is a 185-residue protein sequence, read N- to C-terminus: Elongation factor P (185 aa).

The protein belongs to the elongation factor P family.

It is found in the cytoplasm. Its pathway is protein biosynthesis; polypeptide chain elongation. Involved in peptide bond synthesis. Stimulates efficient translation and peptide-bond synthesis on native or reconstituted 70S ribosomes in vitro. Probably functions indirectly by altering the affinity of the ribosome for aminoacyl-tRNA, thus increasing their reactivity as acceptors for peptidyl transferase. This Symbiobacterium thermophilum (strain DSM 24528 / JCM 14929 / IAM 14863 / T) protein is Elongation factor P.